Consider the following 527-residue polypeptide: Pyruvate kinase 2, cytosolic (527 aa).

R58 is a binding site for substrate. Positions 60, 62, 92, and 93 each coordinate K(+). 60-63 (DFSW) provides a ligand contact to ATP. K256 contacts substrate. E258 serves as a coordination point for Mg(2+). Substrate-binding residues include G281, N282, and T313. N282 serves as a coordination point for Mg(2+).

The protein belongs to the pyruvate kinase family. As to quaternary structure, homotetramer. Mg(2+) serves as cofactor. K(+) is required as a cofactor.

The protein resides in the cytoplasm. The protein localises to the cytosol. It catalyses the reaction pyruvate + ATP = phosphoenolpyruvate + ADP + H(+). Its pathway is carbohydrate degradation; glycolysis; pyruvate from D-glyceraldehyde 3-phosphate: step 5/5. Its function is as follows. Key regulatory enzyme of the glycolytic pathway that catalyzes the final step of glycolysis, converting ADP and phosphoenolpyruvate (PEP) to ATP and pyruvate by essentially irreversible transphosphorylation. The chain is Pyruvate kinase 2, cytosolic from Oryza sativa subsp. indica (Rice).